The sequence spans 277 residues: Protein OPG166 (277 aa).

Asparagine 29 and asparagine 58 each carry an N-linked (GlcNAc...) asparagine; by host glycan. Transmembrane regions (helical) follow at residues 124–144 (TMLMFIFTGITLFLLFLEIAY), 156–176 (GILQVFGCIIAMIELCGAFLF), 186–206 (IIGLLMMTLPSIFLIITKVFS), 219–239 (LIIYYQLAGYILTVLGLGLSL), and 247–267 (LLLSGLGTIMVSEHFSLLFLV).

Belongs to the orthopoxvirus OPG166 protein family.

Its subcellular location is the host membrane. In terms of biological role, promotes, when overexpressed, the influx of extracellular Ca(2+), leading to membrane permeability and host cell necrosis. The sequence is that of Protein OPG166 (OPG166) from Variola virus (isolate Human/India/Ind3/1967) (VARV).